A 1437-amino-acid chain; its full sequence is Protein CC2D2B (1437 aa).

The sequence is that of Protein CC2D2B from Homo sapiens (Human).